A 188-amino-acid polypeptide reads, in one-letter code: Putative manganese efflux pump MntP (188 aa).

6 consecutive transmembrane segments (helical) span residues 3–23 (LFSLWVMAFGLSMDAFAVSIC), 39–59 (AGLYFGLFQAVMPLIGFLLGV), 65–85 (ITDYDHWVAFFLLALIGVNML), 110–130 (LGFATSIDALAVGVTFAFLSV), 131–151 (DIYSSVVTIGLITAALSIIGV), and 167–187 (ILGGLILIGLGVKILMEHTLF).

It belongs to the MntP (TC 9.B.29) family.

Its subcellular location is the cell inner membrane. Probably functions as a manganese efflux pump. In Mannheimia succiniciproducens (strain KCTC 0769BP / MBEL55E), this protein is Putative manganese efflux pump MntP.